Reading from the N-terminus, the 692-residue chain is Elongation factor G (692 aa).

The region spanning 8 to 282 is the tr-type G domain; that stretch reads EKTRNIGIMA…AVVEYMPAPT (275 aa). GTP contacts are provided by residues 17–24, 81–85, and 135–138; these read AHIDAGKT, DTPGH, and NKMD. A disordered region spans residues 285–304; sequence PNIKGVHPETGEADERHSSD. Over residues 290–304 the composition is skewed to basic and acidic residues; sequence VHPETGEADERHSSD.

It belongs to the TRAFAC class translation factor GTPase superfamily. Classic translation factor GTPase family. EF-G/EF-2 subfamily.

Its subcellular location is the cytoplasm. In terms of biological role, catalyzes the GTP-dependent ribosomal translocation step during translation elongation. During this step, the ribosome changes from the pre-translocational (PRE) to the post-translocational (POST) state as the newly formed A-site-bound peptidyl-tRNA and P-site-bound deacylated tRNA move to the P and E sites, respectively. Catalyzes the coordinated movement of the two tRNA molecules, the mRNA and conformational changes in the ribosome. The sequence is that of Elongation factor G from Desulfitobacterium hafniense (strain Y51).